The following is a 75-amino-acid chain: Vacuolar ATPase assembly integral membrane protein VMA21 (75 aa).

Residues 1 to 8 (MPVDVAPG) lie on the Cytoplasmic side of the membrane. Residues 9-29 (VIKKLMFFTAAMVICPLLTFF) traverse the membrane as a helical segment. Over 30–41 (SIKQFTTNTIVS) the chain is Lumenal. The chain crosses the membrane as a helical span at residues 42–62 (GGLAALAANLVLIGYIVVAFM). Topologically, residues 63–75 (EDTTDVKAESKKD) are cytoplasmic.

Belongs to the VMA21 family.

It localises to the endoplasmic reticulum membrane. The protein localises to the endoplasmic reticulum-Golgi intermediate compartment membrane. The protein resides in the cytoplasmic vesicle. It is found in the COPII-coated vesicle membrane. Required for the assembly of the V0 complex of the vacuolar ATPase (V-ATPase) in the endoplasmic reticulum. The polypeptide is Vacuolar ATPase assembly integral membrane protein VMA21 (Vanderwaltozyma polyspora (strain ATCC 22028 / DSM 70294 / BCRC 21397 / CBS 2163 / NBRC 10782 / NRRL Y-8283 / UCD 57-17) (Kluyveromyces polysporus)).